The chain runs to 289 residues: Rhodopsin (289 aa).

The Extracellular portion of the chain corresponds to 1–7 (YLVSPAG). The helical transmembrane segment at 8–32 (YAALGAYMFLLILVGFPVNFLTLYV) threads the bilayer. Topologically, residues 33–44 (TLEHKKLRTPLN) are cytoplasmic. The chain crosses the membrane as a helical span at residues 45 to 67 (YILLNLAVADLFMVLGGFTTTMY). Over 68–81 (TSMHGYFVLGRLGC) the chain is Extracellular. C81 and C158 are disulfide-bonded. A helical transmembrane segment spans residues 82-104 (NLEGFFVTLGGEIALWSLVVLAI). Positions 105–107 (ERW) match the 'Ionic lock' involved in activated form stabilization motif. Topologically, residues 105 to 123 (ERWIGVFKSIRNFRFTEDH) are cytoplasmic. Residues 124 to 144 (AIMGLGFSWVMAATCAVPPLV) traverse the membrane as a helical segment. At 145-173 (GWLRYIPEGMQCSCGVDYYTRAEGFNNES) the chain is on the extracellular side. N-linked (GlcNAc...) asparagine glycosylation is present at N171. Residues 174-195 (FVIYMFIVHFLIPLIVIFFCYG) traverse the membrane as a helical segment. Residues 196–223 (RLLCAVKEAAAAQQESETTQRAEKEVSR) lie on the Cytoplasmic side of the membrane. A helical transmembrane segment spans residues 224–245 (MVVIMVIGYLVCWLPYASVAWW). Over 246–257 (IFCNQGSEFGPI) the chain is Extracellular. A helical membrane pass occupies residues 258–279 (FMTLPAFFAKSPAIYNPLIYIC). K267 carries the N6-(retinylidene)lysine modification. The Cytoplasmic segment spans residues 280–289 (MNKQFPHCMI).

This sequence belongs to the G-protein coupled receptor 1 family. Opsin subfamily. Post-translationally, phosphorylated on some or all of the serine and threonine residues present in the C-terminal region. Contains one covalently linked retinal chromophore.

Its subcellular location is the membrane. The protein localises to the cell projection. It localises to the cilium. The protein resides in the photoreceptor outer segment. Photoreceptor required for image-forming vision at low light intensity. While most salt water fish species use retinal as chromophore, most freshwater fish use 3-dehydroretinal, or a mixture of retinal and 3-dehydroretinal. Light-induced isomerization of 11-cis to all-trans retinal triggers a conformational change that activates signaling via G-proteins. Subsequent receptor phosphorylation mediates displacement of the bound G-protein alpha subunit by arrestin and terminates signaling. This is Rhodopsin (rho) from Leocottus kesslerii (Kessler's sculpin).